An 823-amino-acid polypeptide reads, in one-letter code: ATP-dependent DNA helicase At3g02060, chloroplastic (823 aa).

Residues 1 to 53 (MMSLLPNPDPITVPLVLKLCSFPPPRRLFSLRLRRFTRKSSSLLPLVAVSSLS) constitute a chloroplast transit peptide. Residues 285–447 (LTERETPMDR…LTGFRDASLI (163 aa)) enclose the Helicase ATP-binding domain. 298–305 (GDVGFGKT) is a binding site for ATP. A DEEQ box motif is present at residues 400-403 (DEEQ). One can recognise a Helicase C-terminal domain in the interval 465–622 (RKEKVIEAIK…GFQLAEKDMG (158 aa)).

It belongs to the helicase family.

It is found in the plastid. Its subcellular location is the chloroplast. It catalyses the reaction ATP + H2O = ADP + phosphate + H(+). The protein is ATP-dependent DNA helicase At3g02060, chloroplastic of Arabidopsis thaliana (Mouse-ear cress).